Consider the following 416-residue polypeptide: Neamine transaminase NeoN (416 aa).

Lys231 is modified (N6-(pyridoxal phosphate)lysine).

This sequence belongs to the class-III pyridoxal-phosphate-dependent aminotransferase family. Requires pyridoxal 5'-phosphate as cofactor.

The enzyme catalyses neomycin C + 2-oxoglutarate = 6'''-deamino-6'''-oxoneomycin C + L-glutamate. It carries out the reaction neamine + 2-oxoglutarate = 6'-oxoparomamine + L-glutamate. Its pathway is antibiotic biosynthesis; neomycin biosynthesis. Its function is as follows. 6'-oxoglucosaminyl:L-glutamate aminotransferase that catalyzes pyridoxal-5'-phosphate-mediated transamination for the conversion of paromamine to neamine in the biosynthetic pathway of neomycin. Also able to catalyze deamination at C-6''' of neomycin. The sequence is that of Neamine transaminase NeoN (neoN) from Streptomyces fradiae (Streptomyces roseoflavus).